We begin with the raw amino-acid sequence, 159 residues long: Serine-protein kinase RsbW (159 aa).

The protein belongs to the anti-sigma-factor family.

It catalyses the reaction L-seryl-[protein] + ATP = O-phospho-L-seryl-[protein] + ADP + H(+). The catalysed reaction is L-threonyl-[protein] + ATP = O-phospho-L-threonyl-[protein] + ADP + H(+). In terms of biological role, negative regulator of sigma-B activity. Phosphorylates and inactivates its specific antagonist protein, RsbV. Upon phosphorylation of RsbV, RsbW is released and binds to sigma-B, thereby blocking its ability to form an RNA polymerase holoenzyme (E-sigma-B). In Staphylococcus aureus, this protein is Serine-protein kinase RsbW.